The primary structure comprises 246 residues: Uridylate kinase (246 aa).

20-23 contacts ATP; sequence KISG. An involved in allosteric activation by GTP region spans residues 28-33; sequence GDQGYG. Residue glycine 62 coordinates UMP. ATP contacts are provided by glycine 63 and arginine 67. UMP is bound by residues aspartate 82 and 143–150; that span reads TGNPYFTT. ATP contacts are provided by threonine 170, tyrosine 176, and aspartate 179.

The protein belongs to the UMP kinase family. Homohexamer.

It is found in the cytoplasm. It carries out the reaction UMP + ATP = UDP + ADP. It participates in pyrimidine metabolism; CTP biosynthesis via de novo pathway; UDP from UMP (UMPK route): step 1/1. Its activity is regulated as follows. Allosterically activated by GTP. Inhibited by UTP. Catalyzes the reversible phosphorylation of UMP to UDP. This chain is Uridylate kinase, found in Cereibacter sphaeroides (strain ATCC 17025 / ATH 2.4.3) (Rhodobacter sphaeroides).